A 639-amino-acid polypeptide reads, in one-letter code: Chaperone protein HtpG (639 aa).

An a; substrate-binding region spans residues M1 to R343. The tract at residues E344–R564 is b. The c stretch occupies residues L565–E639.

The protein belongs to the heat shock protein 90 family. As to quaternary structure, homodimer.

Its subcellular location is the cytoplasm. Its function is as follows. Molecular chaperone. Has ATPase activity. The polypeptide is Chaperone protein HtpG (Nitrosospira multiformis (strain ATCC 25196 / NCIMB 11849 / C 71)).